Here is a 455-residue protein sequence, read N- to C-terminus: Kynurenine 3-monooxygenase (455 aa).

2 helical membrane-spanning segments follow: residues 393–416 and 429–453; these read WLFRLFPTIWVPLYNSVSFTSMPY and LLWRTFLGFIVVGLGVTGSAIYWQR.

Belongs to the aromatic-ring hydroxylase family. KMO subfamily. The cofactor is FAD.

The protein localises to the mitochondrion. The protein resides in the membrane. It carries out the reaction L-kynurenine + NADPH + O2 + H(+) = 3-hydroxy-L-kynurenine + NADP(+) + H2O. It participates in cofactor biosynthesis; NAD(+) biosynthesis; quinolinate from L-kynurenine: step 1/3. In terms of biological role, catalyzes the hydroxylation of L-kynurenine (L-Kyn) to form 3-hydroxy-L-kynurenine (L-3OHKyn). Required for synthesis of quinolinic acid. The sequence is that of Kynurenine 3-monooxygenase from Drosophila willistoni (Fruit fly).